Reading from the N-terminus, the 600-residue chain is Kelch-like protein 24 (600 aa).

In terms of domain architecture, BTB spans 66-133 (TDVIICVEGK…VYTGKVKITT (68 aa)). One can recognise a BACK domain in the interval 168-270 (CLGIQRFADT…HPNYFVQTVE (103 aa)). Kelch repeat units follow at residues 314-363 (VIVV…ALRN), 365-407 (ILVS…VLLG), 408-454 (KVYV…SCIG), 456-502 (LFVI…SLNN), 504-544 (IYVA…VCNG), and 546-592 (IYIL…TIHR).

As to quaternary structure, forms homodimers. Interacts with GRIK2. Component of the BCR(KLHL24) E3 ubiquitin ligase complex, composed of CUL3, RBX1 and KLHL24. Interacts with CUL3. Interacts with KRT14. In terms of processing, autoubiquitinated. Autoubiquitination leads to proteasomal degradation and is necessary to control KLHL24 levels. As to expression, expressed in the brain.

It localises to the perikaryon. Its subcellular location is the cell projection. The protein resides in the axon. The protein localises to the cytoplasm. It is found in the cell junction. It localises to the desmosome. Its subcellular location is the adherens junction. Functionally, controls KRT14 levels during keratinocytes differentiation. As part of the BCR(KLHL24) E3 ubiquitin ligase complex, mediates ubiquitination of KRT14. Specifically reduces kainate receptor-mediated currents in hippocampal neurons, most probably by modulating channel properties. Has a crucial role in cardiac development and function. The chain is Kelch-like protein 24 (Klhl24) from Mus musculus (Mouse).